The chain runs to 284 residues: Parvulin-like PPIase (284 aa).

The N-terminal stretch at 1–20 (MKKLSIVLLSVSMLSSIAFA) is a signal peptide. Residues 139-232 (KEQIKVAHIL…YGWHIIKVLE (94 aa)) form the PpiC domain.

It belongs to the PpiC/parvulin rotamase family.

The protein localises to the cell outer membrane. The catalysed reaction is [protein]-peptidylproline (omega=180) = [protein]-peptidylproline (omega=0). The chain is Parvulin-like PPIase (plp) from Rickettsia bellii (strain RML369-C).